The chain runs to 165 residues: MAPITLSTIDGKLKDIIQHLFEIQSAVHGYLGPETQQELVRKIKNLTTALQTLSLHTRDDPTASTTAPNQYQSTNPNDPALHSIALPPEIIDYVDAARNPDIYTREFVELVQRGNQDLKGKKEAFADFRDVLAREMRSAMPELRGEVDKVIQATGGKKQSERERG.

Disordered stretches follow at residues 54–81 and 143–165; these read SLHTRDDPTASTTAPNQYQSTNPNDPAL and LRGEVDKVIQATGGKKQSERERG. Over residues 62–77 the composition is skewed to polar residues; it reads TASTTAPNQYQSTNPN.

It belongs to the Mediator complex subunit 10 family. Component of the Mediator complex.

Its subcellular location is the nucleus. In terms of biological role, component of the Mediator complex, a coactivator involved in the regulated transcription of nearly all RNA polymerase II-dependent genes. Mediator functions as a bridge to convey information from gene-specific regulatory proteins to the basal RNA polymerase II transcription machinery. Mediator is recruited to promoters by direct interactions with regulatory proteins and serves as a scaffold for the assembly of a functional preinitiation complex with RNA polymerase II and the general transcription factors. This is Mediator of RNA polymerase II transcription subunit 10 (nut2) from Emericella nidulans (strain FGSC A4 / ATCC 38163 / CBS 112.46 / NRRL 194 / M139) (Aspergillus nidulans).